Reading from the N-terminus, the 362-residue chain is Spermidine/putrescine import ATP-binding protein PotA (362 aa).

An ABC transporter domain is found at 6 to 237 (ISFKHVVKSY…PINHYVADFI (232 aa)). 39–46 (GPSGCGKT) contributes to the ATP binding site.

This sequence belongs to the ABC transporter superfamily. Spermidine/putrescine importer (TC 3.A.1.11.1) family. In terms of assembly, the complex is composed of two ATP-binding proteins (PotA), two transmembrane proteins (PotB and PotC) and a solute-binding protein (PotD).

The protein resides in the cell membrane. The catalysed reaction is ATP + H2O + polyamine-[polyamine-binding protein]Side 1 = ADP + phosphate + polyamineSide 2 + [polyamine-binding protein]Side 1.. Its function is as follows. Part of the ABC transporter complex PotABCD involved in spermidine/putrescine import. Responsible for energy coupling to the transport system. This chain is Spermidine/putrescine import ATP-binding protein PotA, found in Ligilactobacillus salivarius (strain UCC118) (Lactobacillus salivarius).